Here is a 269-residue protein sequence, read N- to C-terminus: Tryptophan synthase alpha chain (269 aa).

Active-site proton acceptor residues include Glu-49 and Asp-60.

It belongs to the TrpA family. As to quaternary structure, tetramer of two alpha and two beta chains.

The catalysed reaction is (1S,2R)-1-C-(indol-3-yl)glycerol 3-phosphate + L-serine = D-glyceraldehyde 3-phosphate + L-tryptophan + H2O. It functions in the pathway amino-acid biosynthesis; L-tryptophan biosynthesis; L-tryptophan from chorismate: step 5/5. The alpha subunit is responsible for the aldol cleavage of indoleglycerol phosphate to indole and glyceraldehyde 3-phosphate. The polypeptide is Tryptophan synthase alpha chain (Actinobacillus pleuropneumoniae serotype 7 (strain AP76)).